Here is a 411-residue protein sequence, read N- to C-terminus: Phosphopentomutase (411 aa).

The Mn(2+) site is built by aspartate 14, aspartate 306, histidine 311, aspartate 347, histidine 348, and histidine 359.

The protein belongs to the phosphopentomutase family. Mn(2+) is required as a cofactor.

The protein localises to the cytoplasm. The catalysed reaction is 2-deoxy-alpha-D-ribose 1-phosphate = 2-deoxy-D-ribose 5-phosphate. The enzyme catalyses alpha-D-ribose 1-phosphate = D-ribose 5-phosphate. The protein operates within carbohydrate degradation; 2-deoxy-D-ribose 1-phosphate degradation; D-glyceraldehyde 3-phosphate and acetaldehyde from 2-deoxy-alpha-D-ribose 1-phosphate: step 1/2. Functionally, isomerase that catalyzes the conversion of deoxy-ribose 1-phosphate (dRib-1-P) and ribose 1-phosphate (Rib-1-P) to deoxy-ribose 5-phosphate (dRib-5-P) and ribose 5-phosphate (Rib-5-P), respectively. The polypeptide is Phosphopentomutase (Lactococcus lactis subsp. lactis (strain IL1403) (Streptococcus lactis)).